The primary structure comprises 212 residues: Casparian strip membrane protein 1 (212 aa).

The segment at 1–28 (MDSSNSTKETGDIPIPVTSSKSSKAAPP) is disordered. The Cytoplasmic portion of the chain corresponds to 1–49 (MDSSNSTKETGDIPIPVTSSKSSKAAPPPVVAAKAKSTTKQPLVSGWKR). Over residues 16-28 (PVTSSKSSKAAPP) the composition is skewed to low complexity. The chain crosses the membrane as a helical span at residues 50–70 (GLGIIDFILRICAIAAALAAA). At 71 to 100 (TAMGTTSQQLPFFTQFFQFKADYNDLPAFT) the chain is on the extracellular side. Residues 101 to 121 (FFVIANAMAGAYLVLSLPFSI) traverse the membrane as a helical segment. Over 122–133 (LCIVRPHILGAR) the chain is Cytoplasmic. The chain crosses the membrane as a helical span at residues 134–154 (LMLLVFDTVAVPLVTAAASAA). Topologically, residues 155 to 186 (ASIVYLAHNGNSDANWVAICRQFNDFCQRVSG) are extracellular. The helical transmembrane segment at 187–207 (AVVASFITALLFVVLVAVSAV) threads the bilayer. At 208-212 (ALRQK) the chain is on the cytoplasmic side.

The protein belongs to the Casparian strip membrane proteins (CASP) family. In terms of assembly, homodimer and heterodimers.

The protein localises to the cell membrane. In terms of biological role, regulates membrane-cell wall junctions and localized cell wall deposition. Required for establishment of the Casparian strip membrane domain (CSD) and the subsequent formation of Casparian strips, a cell wall modification of the root endodermis that determines an apoplastic barrier between the intraorganismal apoplasm and the extraorganismal apoplasm and prevents lateral diffusion. The sequence is that of Casparian strip membrane protein 1 from Helianthus annuus (Common sunflower).